The following is a 351-amino-acid chain: N(4)-bis(aminopropyl)spermidine synthase (351 aa).

This sequence belongs to the branched-chain polyamine synthase family.

It is found in the cytoplasm. It carries out the reaction 2 S-adenosyl 3-(methylsulfanyl)propylamine + spermidine = N(4)-bis(aminopropyl)spermidine + 2 S-methyl-5'-thioadenosine + 2 H(+). It participates in amine and polyamine biosynthesis. Involved in the biosynthesis of branched-chain polyamines, which support the growth of thermophiles under high-temperature conditions. Catalyzes the sequential condensation of spermidine with the aminopropyl groups of decarboxylated S-adenosylmethionines to produce N(4)-bis(aminopropyl)spermidine via N(4)-aminopropylspermidine. Can also use spermine to produce N(4)-aminopropylspermine. This Thermococcus kodakarensis (strain ATCC BAA-918 / JCM 12380 / KOD1) (Pyrococcus kodakaraensis (strain KOD1)) protein is N(4)-bis(aminopropyl)spermidine synthase.